Reading from the N-terminus, the 227-residue chain is Transcriptional regulatory protein CusR (227 aa).

The 115-residue stretch at 2 to 116 (KLLIVEDEKK…ELLARVRTLL (115 aa)) folds into the Response regulatory domain. Aspartate 51 bears the 4-aspartylphosphate mark. The ompR/PhoB-type DNA-binding region spans 125–223 (ESQFQVADLM…VRGVGYMLEV (99 aa)).

Post-translationally, phosphorylated by CusS.

Its subcellular location is the cytoplasm. Member of the two-component regulatory system CusS/CusR involved in response to copper and silver. The protein is Transcriptional regulatory protein CusR (cusR) of Escherichia coli O6:H1 (strain CFT073 / ATCC 700928 / UPEC).